A 419-amino-acid chain; its full sequence is L-rhamnose isomerase (419 aa).

Mn(2+)-binding residues include His262, Asp294, and Asp296.

The protein belongs to the rhamnose isomerase family. Homotetramer. It depends on Mn(2+) as a cofactor.

It is found in the cytoplasm. It carries out the reaction L-rhamnopyranose = L-rhamnulose. The protein operates within carbohydrate degradation; L-rhamnose degradation; glycerone phosphate from L-rhamnose: step 1/3. Its function is as follows. Catalyzes the interconversion of L-rhamnose and L-rhamnulose. The chain is L-rhamnose isomerase from Salmonella choleraesuis (strain SC-B67).